The chain runs to 51 residues: Insulin (51 aa).

3 disulfides stabilise this stretch: cysteine 7–cysteine 37, cysteine 19–cysteine 50, and cysteine 36–cysteine 41.

This sequence belongs to the insulin family. In terms of assembly, heterodimer of a B chain and an A chain linked by two disulfide bonds.

It localises to the secreted. In terms of biological role, insulin decreases blood glucose concentration. It increases cell permeability to monosaccharides, amino acids and fatty acids. It accelerates glycolysis, the pentose phosphate cycle, and glycogen synthesis in liver. The polypeptide is Insulin (INS) (Balaenoptera borealis (Sei whale)).